A 282-amino-acid chain; its full sequence is MARLVLELLAAALLLRVAATLRISAFNIRTFGDSKMSNQTVAGFIVSILVQYDITLVQEVRDADLSSVKKLVSQLNSASSYPYSFLSSIPLGRNSYKEQYVFIYRSDIVSVLESYYYDDGCESCGTDIFSREPFIVKFSSPTTQLDEFVIVPLHAEPSSAPAEINALTDVYTDVINKWETNNIFFMGDFNADCSYVTAEQWPSIRLRSLSSCEWLIPDSADTTVTSTDCAYDRIVACGSALRQAVEYGSATVNNFQETLRIQNKDALAISDHFPVEVTLKAR.

Residues 1–20 (MARLVLELLAAALLLRVAAT) form the signal peptide. Asn38 is a glycosylation site (N-linked (GlcNAc...) asparagine). Glu98 is an active-site residue. A disulfide bond links Cys121 and Cys124. Residue His154 is part of the active site. Cys193 and Cys229 are joined by a disulfide.

It belongs to the DNase I family. The cofactor is Ca(2+). Mg(2+) is required as a cofactor. N-glycosylated.

It is found in the secreted. Its subcellular location is the zymogen granule. The protein localises to the nucleus envelope. It catalyses the reaction Endonucleolytic cleavage to 5'-phosphodinucleotide and 5'-phosphooligonucleotide end-products.. Functionally, serum endocuclease secreted into body fluids by a wide variety of exocrine and endocrine organs. Expressed by non-hematopoietic tissues and preferentially cleaves protein-free DNA. Among other functions, seems to be involved in cell death by apoptosis. Binds specifically to G-actin and blocks actin polymerization. The chain is Deoxyribonuclease-1 (DNASE1) from Gallus gallus (Chicken).